The sequence spans 203 residues: Small ribosomal subunit protein uS4 (203 aa).

In terms of domain architecture, S4 RNA-binding spans 93-156 (RRLDNVVYRL…AKVPAILEAV (64 aa)).

The protein belongs to the universal ribosomal protein uS4 family. Part of the 30S ribosomal subunit. Contacts protein S5. The interaction surface between S4 and S5 is involved in control of translational fidelity.

One of the primary rRNA binding proteins, it binds directly to 16S rRNA where it nucleates assembly of the body of the 30S subunit. Functionally, with S5 and S12 plays an important role in translational accuracy. This chain is Small ribosomal subunit protein uS4, found in Streptococcus mutans serotype c (strain ATCC 700610 / UA159).